Reading from the N-terminus, the 93-residue chain is Putative transmembrane protein ORF25 (93 aa).

The next 3 membrane-spanning stretches (helical) occupy residues 1 to 21, 22 to 42, and 60 to 80; these read MAGI…NVNA, FLVL…YASI, and LWIF…VMSL.

It is found in the host membrane. In His1 virus (isolate Australia/Victoria) (His1V), this protein is Putative transmembrane protein ORF25.